Reading from the N-terminus, the 453-residue chain is F-box protein At4g27050 (453 aa).

The region spanning 3-51 (TDLISNLPDDVLGKILSLVPTKLAAATSVLSKRWRNLLPLVDSLDFDET) is the F-box domain.

Part of a SCF (ASK-cullin-F-box) protein ligase complex.

The protein operates within protein modification; protein ubiquitination. In terms of biological role, component of SCF(ASK-cullin-F-box) E3 ubiquitin ligase complexes, which may mediate the ubiquitination and subsequent proteasomal degradation of target proteins. This Arabidopsis thaliana (Mouse-ear cress) protein is F-box protein At4g27050.